We begin with the raw amino-acid sequence, 618 residues long: Vacuolar-sorting receptor 5 (618 aa).

The N-terminal stretch at 1–23 (MSPSNKGTVLALILALTMVVVNG) is a signal peptide. The Lumenal segment spans residues 24 to 563 (FSSRFFVEKS…IERRSGSRSR (540 aa)). The PA domain maps to 58-164 (KYGGFMIGSV…SFGDSLKKAL (107 aa)). Residues N81, N293, and N430 are each glycosylated (N-linked (GlcNAc...) asparagine). 2 EGF-like domains span residues 412–462 (ETNE…TSCK) and 465–511 (GPAR…LKCE). 7 cysteine pairs are disulfide-bonded: C416-C434, C423-C443, C445-C461, C469-C489, C476-C497, C499-C510, and C540-C553. An EGF-like 3; calcium-binding domain is found at 512–554 (DIDECKEKSACKCDGCKCKNNWGGYECKCSNNSIYMKEEDTCI). N542 carries an N-linked (GlcNAc...) asparagine glycan. Residues 564–584 (GLFTIVVLTAIAGISLGAYIF) traverse the membrane as a helical segment. Over 585–618 (YKYHLQSYMDSEIVSIMSQYIPLDSQSINQDSFK) the chain is Cytoplasmic. The Tyrosine-based internalization motif motif lies at 604-607 (YIPL).

The protein belongs to the VSR (BP-80) family. Expressed in seedlings, roots, leaves, flowers and siliques.

Its subcellular location is the membrane. It localises to the golgi apparatus membrane. The protein localises to the cytoplasmic vesicle. The protein resides in the clathrin-coated vesicle membrane. It is found in the prevacuolar compartment membrane. Its function is as follows. Vacuolar-sorting receptor (VSR) involved in clathrin-coated vesicles sorting from Golgi apparatus to vacuoles. This Arabidopsis thaliana (Mouse-ear cress) protein is Vacuolar-sorting receptor 5 (VSR5).